A 254-amino-acid chain; its full sequence is Ciliary microtubule associated protein 1A (254 aa).

STPGR repeat units follow at residues 180-205 (PGPAAYRQTEVQVTKFKAPQYTMAAR) and 216-241 (PGPGAHSPEKVTLNKPCAPTVTFGIK). Residues 207–228 (EPPGDKTLKPGPGAHSPEKVTL) are disordered.

The protein belongs to the CIMAP family. Microtubule inner protein component of sperm flagellar doublet microtubules. In terms of tissue distribution, testis-specific (at protein level). Expression restricted to the germ cell fraction, absent in somatic cell fractions such as Sertoli and Leydig cells. Expression detected in the third week postpartum (23 days) after haploid germ cells developed, expression increased with age. Expressed in the tails of elongated spermatids sticking out toward the tubular lumen, and in cytoplasmic droplets still attached to the spermatid tail membrane. Expressed in the tails of mature sperm, from the connecting piece proximal to the head, along the middle and principal pieces, down to the distal end piece.

It is found in the cytoplasm. It localises to the cytoskeleton. Its subcellular location is the flagellum axoneme. Functionally, outer dense fibers are filamentous structures located on the outside of the axoneme in the midpiece and principal piece of the mammalian sperm tail. May help to maintain the passive elastic structures and elastic recoil of the sperm tail. The protein is Ciliary microtubule associated protein 1A (Cimap1a) of Mus musculus (Mouse).